Consider the following 449-residue polypeptide: Probable mitochondrial chaperone bcs1 (449 aa).

The Mitochondrial intermembrane portion of the chain corresponds to 1–20 (MDNIGAADAATSSGISGLLS). Residues 21–41 (GNSFLGAGIGLMGFGAGLAIL) form a helical membrane-spanning segment. Residues 42–449 (RRGLISGASL…FNVHRKSLSV (408 aa)) lie on the Mitochondrial matrix side of the membrane. 249-256 (GPPGSGKT) is a binding site for ATP.

This sequence belongs to the AAA ATPase family. BCS1 subfamily.

The protein resides in the mitochondrion inner membrane. The catalysed reaction is ATP + H2O = ADP + phosphate + H(+). Functionally, chaperone necessary for the incorporation of Rieske iron-sulfur protein rip1 into the mitochondrial respiratory chain complex III. The polypeptide is Probable mitochondrial chaperone bcs1 (Schizosaccharomyces pombe (strain 972 / ATCC 24843) (Fission yeast)).